The chain runs to 340 residues: Protein-arginine kinase (340 aa).

Residues Val-21–Ala-242 form the Phosphagen kinase C-terminal domain. Residues Ser-24–Arg-28, His-79, Arg-113, Arg-164–Met-168, and Arg-195–Glu-200 each bind ATP.

The protein belongs to the ATP:guanido phosphotransferase family.

The enzyme catalyses L-arginyl-[protein] + ATP = N(omega)-phospho-L-arginyl-[protein] + ADP + H(+). Catalyzes the specific phosphorylation of arginine residues in proteins. The sequence is that of Protein-arginine kinase from Listeria welshimeri serovar 6b (strain ATCC 35897 / DSM 20650 / CCUG 15529 / CIP 8149 / NCTC 11857 / SLCC 5334 / V8).